Here is an 834-residue protein sequence, read N- to C-terminus: ATP-dependent 6-phosphofructokinase (834 aa).

The tract at residues 1 to 426 is N-terminal catalytic PFK domain 1; it reads MTTTSKIIND…FYEIFIACSN (426 aa). ATP contacts are provided by residues Gly62, 123–124, and 153–156; these read RS and GDGS. Residue Asp154 coordinates Mg(2+). Residues 199 to 201, Arg236, 243 to 245, Glu299, Arg326, and 332 to 335 each bind substrate; these read SID, MGR, and HVQR. Asp201 (proton acceptor) is an active-site residue. The segment at 427 to 437 is interdomain linker; sequence LHRRKVESKGM. The C-terminal regulatory PFK domain 2 stretch occupies residues 438–834; it reads GVLILHSGGP…DPNVNPQFTL (397 aa). Beta-D-fructose 2,6-bisphosphate-binding positions include Arg507, 566–570, Arg603, 610–612, Glu666, Arg692, 698–701, and Arg764; these read TIANN, MGA, and HLQQ. The tract at residues 799-834 is disordered; it reads SNLSEQDRPIKKSDISSPTSYSQKTFDPNVNPQFTL. A compositionally biased stretch (basic and acidic residues) spans 803–812; the sequence is EQDRPIKKSD. Positions 813–834 are enriched in polar residues; sequence ISSPTSYSQKTFDPNVNPQFTL.

The protein belongs to the phosphofructokinase type A (PFKA) family. ATP-dependent PFK group I subfamily. Eukaryotic two domain clade 'E' sub-subfamily. Homotetramer. Mg(2+) serves as cofactor. The N-terminus is blocked.

It is found in the cytoplasm. The catalysed reaction is beta-D-fructose 6-phosphate + ATP = beta-D-fructose 1,6-bisphosphate + ADP + H(+). It functions in the pathway carbohydrate degradation; glycolysis; D-glyceraldehyde 3-phosphate and glycerone phosphate from D-glucose: step 3/4. Its activity is regulated as follows. Allosterically activated by ADP, AMP, or fructose 2,6-bisphosphate, and allosterically inhibited by ATP or citrate. In terms of biological role, catalyzes the phosphorylation of D-fructose 6-phosphate to fructose 1,6-bisphosphate by ATP, the first committing step of glycolysis. The sequence is that of ATP-dependent 6-phosphofructokinase (pfkA) from Dictyostelium discoideum (Social amoeba).